A 135-amino-acid chain; its full sequence is T-cell receptor beta chain V region 3H.25 (135 aa).

The signal sequence occupies residues 1–20 (MATRLLCYTVLCLLGARILN). The segment at 21 to 115 (SKVIQTPRYL…SALYLCASSL (95 aa)) is v segment. A disulfide bond links Cys-42 and Cys-111. The tract at residues 116–118 (FGT) is d segment. The interval 119-135 (SDYTFGSGTRLLVIGKA) is j segment.

In Mus musculus (Mouse), this protein is T-cell receptor beta chain V region 3H.25.